Here is a 225-residue protein sequence, read N- to C-terminus: UPF0700 transmembrane protein RA0705 (225 aa).

The next 6 helical transmembrane spans lie at 17–37 (VGLALVAAISFLAGMTDAIGL), 66–86 (GLLLIGGLVSFVLGNAAGVMI), 95–115 (ALLFVSALLACAALQEGQPEL), 117–137 (FVSLIFAMGAVNASVEQIEGL), 168–188 (IIQIVPWLGMFAGAIMGAVLV), and 194–214 (LALWVPSLAALLLTAAAFQIP).

This sequence belongs to the UPF0700 family.

The protein localises to the cell membrane. The chain is UPF0700 transmembrane protein RA0705 from Rhizobium meliloti (strain 1021) (Ensifer meliloti).